Here is a 760-residue protein sequence, read N- to C-terminus: Prolyl endopeptidase FAP (760 aa).

The Cytoplasmic segment spans residues 1–4 (MKTW). A helical; Signal-anchor for type II membrane protein transmembrane segment spans residues 5-25 (VKIVFGVATSAVLALLVMCIV). The Extracellular segment spans residues 26–760 (LRPSRVHNSE…FLKQCFSLSD (735 aa)). N-linked (GlcNAc...) asparagine glycans are attached at residues asparagine 49, asparagine 92, and asparagine 99. The substrate site is built by glutamate 203 and glutamate 204. Asparagine 227 and asparagine 314 each carry an N-linked (GlcNAc...) asparagine glycan. Disulfide bonds link cysteine 321–cysteine 332, cysteine 438–cysteine 441, and cysteine 448–cysteine 466. Serine 624 functions as the Charge relay system in the catalytic mechanism. A disulfide bridge links cysteine 643 with cysteine 755. A glycan (N-linked (GlcNAc...) asparagine) is linked at asparagine 679. Residues aspartate 702 and histidine 734 each act as charge relay system in the active site.

Belongs to the peptidase S9B family. As to quaternary structure, homodimer; homodimerization is required for activity of both plasma membrane and soluble forms. The monomer is inactive. Heterodimer with DPP4. Interacts with PLAUR; the interaction occurs at the cell surface of invadopodia membranes. Interacts with ITGB1. Interacts with ITGA3. Associates with integrin alpha-3/beta-1; the association occurs in a collagen-dependent manner at the cell surface of invadopodia membranes. Post-translationally, N-glycosylated. The N-terminus may be blocked. Expressed in adipose tissue. Expressed in the dermal fibroblasts in the fetal skin. Expressed in the granulation tissue of healing wounds and on reactive stromal fibroblast in epithelial cancers. Expressed in activated fibroblast-like synoviocytes from inflamed synovial tissues. Expressed in activated hepatic stellate cells (HSC) and myofibroblasts from cirrhotic liver, but not detected in normal liver. Expressed in glioma cells (at protein level). Expressed in glioblastomas and glioma cells. Isoform 1 and isoform 2 are expressed in melanoma, carcinoma and fibroblast cell lines.

It is found in the cell surface. The protein resides in the cell membrane. The protein localises to the cell projection. Its subcellular location is the lamellipodium membrane. It localises to the invadopodium membrane. It is found in the ruffle membrane. The protein resides in the membrane. The protein localises to the secreted. Its subcellular location is the cytoplasm. It carries out the reaction Hydrolysis of Pro-|-Xaa &gt;&gt; Ala-|-Xaa in oligopeptides.. It catalyses the reaction Release of an N-terminal dipeptide, Xaa-Yaa-|-Zaa-, from a polypeptide, preferentially when Yaa is Pro, provided Zaa is neither Pro nor hydroxyproline.. Its activity is regulated as follows. Gelatinase activity is inhibited by serine-protease inhibitors, such as phenylmethylsulfonyl fluoride (PMSF), 4-(2-aminoethyl)-benzenesulfonyl fluoride hydrochloride (AEBSF), 4-amidino phenylsulfonyl fluoride (APSF) and diisopropyl fluorophosphate (DFP), N-ethylmaleimide (NEM) and phenylmethylsulfonyl fluoride (PMSF). Dipeptidyl peptidase activity is inhibited by 2,2'-azino-bis(3-ethylbenzthiazoline-6-sulfonic acid), diisopropylfluorophosphate (DFP). Prolyl endopeptidase activity is inhibited by the boronic acid peptide Ac-Gly-BoroPro, Ac-Gly-Pro-chloromethyl ketone and Thr-Ser-Gly-chloromethyl ketone. Cell surface glycoprotein serine protease that participates in extracellular matrix degradation and involved in many cellular processes including tissue remodeling, fibrosis, wound healing, inflammation and tumor growth. Both plasma membrane and soluble forms exhibit post-proline cleaving endopeptidase activity, with a marked preference for Ala/Ser-Gly-Pro-Ser/Asn/Ala consensus sequences, on substrate such as alpha-2-antiplasmin SERPINF2 and SPRY2. Degrade also gelatin, heat-denatured type I collagen, but not native collagen type I and IV, vitronectin, tenascin, laminin, fibronectin, fibrin or casein. Also has dipeptidyl peptidase activity, exhibiting the ability to hydrolyze the prolyl bond two residues from the N-terminus of synthetic dipeptide substrates provided that the penultimate residue is proline, with a preference for Ala-Pro, Ile-Pro, Gly-Pro, Arg-Pro and Pro-Pro. Natural neuropeptide hormones for dipeptidyl peptidase are the neuropeptide Y (NPY), peptide YY (PYY), substance P (TAC1) and brain natriuretic peptide 32 (NPPB). The plasma membrane form, in association with either DPP4, PLAUR or integrins, is involved in the pericellular proteolysis of the extracellular matrix (ECM), and hence promotes cell adhesion, migration and invasion through the ECM. Plays a role in tissue remodeling during development and wound healing. Participates in the cell invasiveness towards the ECM in malignant melanoma cancers. Enhances tumor growth progression by increasing angiogenesis, collagen fiber degradation and apoptosis and by reducing antitumor response of the immune system. Promotes glioma cell invasion through the brain parenchyma by degrading the proteoglycan brevican. Acts as a tumor suppressor in melanocytic cells through regulation of cell proliferation and survival in a serine protease activity-independent manner. The protein is Prolyl endopeptidase FAP of Homo sapiens (Human).